Here is a 96-residue protein sequence, read N- to C-terminus: Muconolactone Delta-isomerase (96 aa).

It belongs to the muconolactone Delta-isomerase family. As to quaternary structure, homodecamer.

It carries out the reaction (S)-muconolactone = (4,5-dihydro-5-oxofuran-2-yl)-acetate. Its pathway is aromatic compound metabolism; beta-ketoadipate pathway; 5-oxo-4,5-dihydro-2-furylacetate from catechol: step 3/3. This chain is Muconolactone Delta-isomerase (catC), found in Acinetobacter baylyi (strain ATCC 33305 / BD413 / ADP1).